A 511-amino-acid chain; its full sequence is Maturase K (511 aa).

This sequence belongs to the intron maturase 2 family. MatK subfamily.

Its subcellular location is the plastid. The protein resides in the chloroplast. In terms of biological role, usually encoded in the trnK tRNA gene intron. Probably assists in splicing its own and other chloroplast group II introns. The sequence is that of Maturase K from Brachypodium distachyon (Purple false brome).